The sequence spans 43 residues: Protein PsbN (43 aa).

Residues Thr5 to Phe27 traverse the membrane as a helical segment.

It belongs to the PsbN family.

Its subcellular location is the plastid. The protein resides in the chloroplast thylakoid membrane. Functionally, may play a role in photosystem I and II biogenesis. This chain is Protein PsbN, found in Lactoris fernandeziana.